A 94-amino-acid polypeptide reads, in one-letter code: Co-chaperonin GroES (94 aa).

It belongs to the GroES chaperonin family. In terms of assembly, heptamer of 7 subunits arranged in a ring. Interacts with the chaperonin GroEL.

The protein localises to the cytoplasm. Together with the chaperonin GroEL, plays an essential role in assisting protein folding. The GroEL-GroES system forms a nano-cage that allows encapsulation of the non-native substrate proteins and provides a physical environment optimized to promote and accelerate protein folding. GroES binds to the apical surface of the GroEL ring, thereby capping the opening of the GroEL channel. This chain is Co-chaperonin GroES, found in Lactobacillus acidophilus (strain ATCC 700396 / NCK56 / N2 / NCFM).